Here is a 434-residue protein sequence, read N- to C-terminus: Nicotinate phosphoribosyltransferase (434 aa).

A Phosphohistidine; by autocatalysis modification is found at His242.

It belongs to the NAPRTase family. Transiently phosphorylated on a His residue during the reaction cycle. Phosphorylation strongly increases the affinity for substrates and increases the rate of nicotinate D-ribonucleotide production. Dephosphorylation regenerates the low-affinity form of the enzyme, leading to product release.

It catalyses the reaction nicotinate + 5-phospho-alpha-D-ribose 1-diphosphate + ATP + H2O = nicotinate beta-D-ribonucleotide + ADP + phosphate + diphosphate. It functions in the pathway cofactor biosynthesis; NAD(+) biosynthesis; nicotinate D-ribonucleotide from nicotinate: step 1/1. Catalyzes the synthesis of beta-nicotinate D-ribonucleotide from nicotinate and 5-phospho-D-ribose 1-phosphate at the expense of ATP. The chain is Nicotinate phosphoribosyltransferase from Rhizobium etli (strain CIAT 652).